We begin with the raw amino-acid sequence, 329 residues long: Cathepsin K (329 aa).

Positions 1-15 are cleaved as a signal peptide; that stretch reads MWGLKVLLLPVVSFA. The propeptide at 16 to 114 is activation peptide; the sequence is LHPEEILDTQ…TLYIPDWEGR (99 aa). Asn103 is a glycosylation site (N-linked (GlcNAc...) asparagine). 2 disulfides stabilise this stretch: Cys136–Cys177 and Cys170–Cys210. Cys139 is a catalytic residue. A glycan (N-linked (GlcNAc...) asparagine) is linked at Asn268. Residues Cys269 and Cys318 are joined by a disulfide bond. Residues His276 and Asn296 contribute to the active site.

The protein belongs to the peptidase C1 family. In terms of tissue distribution, predominantly expressed in osteclasts (bones).

It is found in the lysosome. The protein localises to the secreted. It localises to the apical cell membrane. It carries out the reaction Broad proteolytic activity. With small-molecule substrates and inhibitors, the major determinant of specificity is P2, which is preferably Leu, Met &gt; Phe, and not Arg.. Thiol protease involved in osteoclastic bone resorption and may participate partially in the disorder of bone remodeling. Displays potent endoprotease activity against fibrinogen at acid pH. May play an important role in extracellular matrix degradation. Involved in the release of thyroid hormone thyroxine (T4) by limited proteolysis of TG/thyroglobulin in the thyroid follicle lumen. The chain is Cathepsin K (CTSK) from Oryctolagus cuniculus (Rabbit).